Here is a 492-residue protein sequence, read N- to C-terminus: Trypanothione reductase (492 aa).

36–52 (DVQMVHGPPFFSALGGT) is a binding site for FAD. Cys53 and Cys58 are disulfide-bonded. The active-site Proton acceptor is the His461.

Belongs to the class-I pyridine nucleotide-disulfide oxidoreductase family. In terms of assembly, homodimer. The cofactor is FAD.

It is found in the cytoplasm. The enzyme catalyses trypanothione + NADP(+) = trypanothione disulfide + NADPH + H(+). Functionally, trypanothione is the parasite analog of glutathione; this enzyme is the equivalent of glutathione reductase. This chain is Trypanothione reductase (TPR), found in Trypanosoma cruzi.